A 457-amino-acid polypeptide reads, in one-letter code: uncharacterized protein (457 aa).

The TRAM domain occupies 5-63 (PVKKNDVIEVEIIDLTHEGLGVAKVDHYPLFIENALPGEKLEIKVLKTGKSFGYGKVLT). 4 residues coordinate S-adenosyl-L-methionine: Q287, Y316, E337, and D385. C412 (nucleophile) is an active-site residue.

It belongs to the class I-like SAM-binding methyltransferase superfamily. RNA M5U methyltransferase family.

This is an uncharacterized protein from Enterococcus faecalis (strain ATCC 700802 / V583).